Here is a 233-residue protein sequence, read N- to C-terminus: Small ribosomal subunit protein uS2 (233 aa).

The protein belongs to the universal ribosomal protein uS2 family.

In Clostridium novyi (strain NT), this protein is Small ribosomal subunit protein uS2.